The primary structure comprises 201 residues: Holliday junction branch migration complex subunit RuvA (201 aa).

A domain I region spans residues 1-64; it reads MIGRLYGKII…EDAHLLFGFA (64 aa). The segment at 65 to 143 is domain II; it reads QKQDRTLFRE…GIAQTDFFVE (79 aa). The flexible linker stretch occupies residues 144 to 154; the sequence is HSHETMVATYE. The domain III stretch occupies residues 154 to 201; it reads EIDASEEARDALLALGYKLTDAEKMIKKVHKSGATSEQLIRDALKASL.

This sequence belongs to the RuvA family. In terms of assembly, homotetramer. Forms an RuvA(8)-RuvB(12)-Holliday junction (HJ) complex. HJ DNA is sandwiched between 2 RuvA tetramers; dsDNA enters through RuvA and exits via RuvB. An RuvB hexamer assembles on each DNA strand where it exits the tetramer. Each RuvB hexamer is contacted by two RuvA subunits (via domain III) on 2 adjacent RuvB subunits; this complex drives branch migration. In the full resolvosome a probable DNA-RuvA(4)-RuvB(12)-RuvC(2) complex forms which resolves the HJ.

The protein localises to the cytoplasm. The RuvA-RuvB-RuvC complex processes Holliday junction (HJ) DNA during genetic recombination and DNA repair, while the RuvA-RuvB complex plays an important role in the rescue of blocked DNA replication forks via replication fork reversal (RFR). RuvA specifically binds to HJ cruciform DNA, conferring on it an open structure. The RuvB hexamer acts as an ATP-dependent pump, pulling dsDNA into and through the RuvAB complex. HJ branch migration allows RuvC to scan DNA until it finds its consensus sequence, where it cleaves and resolves the cruciform DNA. This Haemophilus ducreyi (strain 35000HP / ATCC 700724) protein is Holliday junction branch migration complex subunit RuvA.